Reading from the N-terminus, the 65-residue chain is Trypsin inhibitor (65 aa).

In terms of assembly, homotrimer.

The chain is Trypsin inhibitor from Zea mays (Maize).